The sequence spans 255 residues: Thiazole synthase (255 aa).

Residue Lys-96 is the Schiff-base intermediate with DXP of the active site. Residues Gly-157, Ala-183–Gly-184, and Asn-205–Thr-206 contribute to the 1-deoxy-D-xylulose 5-phosphate site.

This sequence belongs to the ThiG family. As to quaternary structure, homotetramer. Forms heterodimers with either ThiH or ThiS.

The protein localises to the cytoplasm. The enzyme catalyses [ThiS sulfur-carrier protein]-C-terminal-Gly-aminoethanethioate + 2-iminoacetate + 1-deoxy-D-xylulose 5-phosphate = [ThiS sulfur-carrier protein]-C-terminal Gly-Gly + 2-[(2R,5Z)-2-carboxy-4-methylthiazol-5(2H)-ylidene]ethyl phosphate + 2 H2O + H(+). It functions in the pathway cofactor biosynthesis; thiamine diphosphate biosynthesis. Functionally, catalyzes the rearrangement of 1-deoxy-D-xylulose 5-phosphate (DXP) to produce the thiazole phosphate moiety of thiamine. Sulfur is provided by the thiocarboxylate moiety of the carrier protein ThiS. In vitro, sulfur can be provided by H(2)S. The polypeptide is Thiazole synthase (Anoxybacillus flavithermus (strain DSM 21510 / WK1)).